The chain runs to 142 residues: Hemoglobin subunit alpha (142 aa).

Ser-1 carries the N-acetylserine modification. The 142-residue stretch at 1-142 (SLSDKDKAAV…VALALAERYR (142 aa)) folds into the Globin domain. O2 is bound at residue His-59. His-88 lines the heme b pocket.

This sequence belongs to the globin family. As to quaternary structure, hb1 is a heterotetramer of two alpha chains and two beta chains. HbC is a heterotetramer of two alpha chains and two beta-C chains. In terms of tissue distribution, red blood cells.

In terms of biological role, involved in oxygen transport from gills to the various peripheral tissues. This is Hemoglobin subunit alpha (hba) from Trematomus bernacchii (Emerald rockcod).